A 304-amino-acid chain; its full sequence is Acetylglutamate kinase (304 aa).

Substrate contacts are provided by residues 82 to 83, Arg104, and Asn197; that span reads GG.

This sequence belongs to the acetylglutamate kinase family. ArgB subfamily.

The protein localises to the cytoplasm. The enzyme catalyses N-acetyl-L-glutamate + ATP = N-acetyl-L-glutamyl 5-phosphate + ADP. It participates in amino-acid biosynthesis; L-arginine biosynthesis; N(2)-acetyl-L-ornithine from L-glutamate: step 2/4. Catalyzes the ATP-dependent phosphorylation of N-acetyl-L-glutamate. The chain is Acetylglutamate kinase from Prochlorococcus marinus (strain NATL2A).